We begin with the raw amino-acid sequence, 505 residues long: ATP synthase subunit alpha (505 aa).

170–177 (GDRQTGKT) contacts ATP.

It belongs to the ATPase alpha/beta chains family. As to quaternary structure, F-type ATPases have 2 components, CF(1) - the catalytic core - and CF(0) - the membrane proton channel. CF(1) has five subunits: alpha(3), beta(3), gamma(1), delta(1), epsilon(1). CF(0) has four main subunits: a(1), b(1), b'(1) and c(9-12).

Its subcellular location is the cellular thylakoid membrane. The catalysed reaction is ATP + H2O + 4 H(+)(in) = ADP + phosphate + 5 H(+)(out). Functionally, produces ATP from ADP in the presence of a proton gradient across the membrane. The alpha chain is a regulatory subunit. In Prochlorococcus marinus (strain SARG / CCMP1375 / SS120), this protein is ATP synthase subunit alpha.